A 164-amino-acid polypeptide reads, in one-letter code: Photosystem II extrinsic protein V (164 aa).

Positions 1-27 (MNRISIYRIKVLAFLFAVSTYVYPASS) are cleaved as a signal peptide. Residues Cys-64, Cys-67, His-68, and His-119 each coordinate heme c.

The protein belongs to the cytochrome c family. PsbV subfamily. PSII is composed of 1 copy each of membrane proteins PsbA, PsbB, PsbC, PsbD, PsbE, PsbF, PsbH, PsbI, PsbJ, PsbK, PsbL, PsbM, PsbT, PsbY, PsbZ, Psb30/Ycf12, at least 3 peripheral proteins of the oxygen-evolving complex and a large number of cofactors. It forms dimeric complexes. The extrinsic subunits in red algae are PsbO (OEC33), PsbQ', cytochrome c-550 and PsbU. Heme c is required as a cofactor.

It localises to the plastid. The protein localises to the chloroplast thylakoid membrane. Functionally, one of the extrinsic, lumenal subunits of photosystem II (PSII). PSII is a light-driven water plastoquinone oxidoreductase, using light energy to abstract electrons from H(2)O, generating a proton gradient subsequently used for ATP formation. The extrinsic proteins stabilize the structure of photosystem II oxygen-evolving complex (OEC), the ion environment of oxygen evolution and protect the OEC against heat-induced inactivation. The polypeptide is Photosystem II extrinsic protein V (Cyanidium caldarium (Red alga)).